We begin with the raw amino-acid sequence, 183 residues long: Capsid protein (183 aa).

Residues 136–183 form a disordered region; it reads NAPILSTLPETTVVRRRGRSPRRRTPSPRRRRSQSPRRRRTQSRESQC. Residues 149–176 show a composition bias toward basic residues; sequence VRRRGRSPRRRTPSPRRRRSQSPRRRRT. Residues Ser-155, Ser-162, and Ser-170 each carry the phosphoserine; by host modification. One copy of the 1; half-length repeat lies at 155-161; that stretch reads SPRRRTP. The 3 X 8 AA repeats of S-P-R-R-R-[PR]-[ST]-Q stretch occupies residues 155–177; the sequence is SPRRRTPSPRRRRSQSPRRRRTQ. The Bipartite nuclear localization signal motif lies at 158–175; that stretch reads RRTPSPRRRRSQSPRRRR. Repeat copies occupy residues 162–169 and 170–177. The tract at residues 177 to 183 is RNA binding; that stretch reads QSRESQC.

It belongs to the orthohepadnavirus core antigen family. As to quaternary structure, homodimerizes, then multimerizes. Interacts with cytosol exposed regions of viral L glycoprotein present in the reticulum-to-Golgi compartment. Interacts with human FLNB. Phosphorylated form interacts with host importin alpha; this interaction depends on the exposure of the NLS, which itself depends upon genome maturation and/or phosphorylation of the capsid protein. Interacts with host NUP153. Phosphorylated by host SRPK1, SRPK2, and maybe protein kinase C or GAPDH. Phosphorylation is critical for pregenomic RNA packaging. Protein kinase C phosphorylation is stimulated by HBx protein and may play a role in transport of the viral genome to the nucleus at the late step during the viral replication cycle.

Its subcellular location is the virion. The protein resides in the host cytoplasm. In terms of biological role, self assembles to form an icosahedral capsid. Most capsids appear to be large particles with an icosahedral symmetry of T=4 and consist of 240 copies of capsid protein, though a fraction forms smaller T=3 particles consisting of 180 capsid proteins. Entering capsids are transported along microtubules to the nucleus. Phosphorylation of the capsid is thought to induce exposure of nuclear localization signal in the C-terminal portion of the capsid protein that allows binding to the nuclear pore complex via the importin (karyopherin-) alpha and beta. Capsids are imported in intact form through the nuclear pore into the nuclear basket, where it probably binds NUP153. Only capsids that contain the mature viral genome can release the viral DNA and capsid protein into the nucleoplasm. Immature capsids get stuck in the basket. Capsids encapsulate the pre-genomic RNA and the P protein. Pre-genomic RNA is reverse-transcribed into DNA while the capsid is still in the cytoplasm. The capsid can then either be directed to the nucleus, providing more genomes for transcription, or bud through the endoplasmic reticulum to provide new virions. This is Capsid protein from Hepatitis B virus genotype D (isolate France/alpha1/1989) (HBV-D).